The sequence spans 317 residues: Melanocyte-stimulating hormone receptor (317 aa).

The Extracellular segment spans residues 1–37 (MAVQGFQRRLLGSLNSTPTAIPQLGLAANQTGARCLE). Asn29 carries N-linked (GlcNAc...) asparagine glycosylation. A helical membrane pass occupies residues 38–63 (VSIPDGLFLSLGLVSLVENVLVVATI). Over 64 to 72 (AKNRNLHSP) the chain is Cytoplasmic. The chain crosses the membrane as a helical span at residues 73–93 (TYCFICCLALSDLLVSGGNVL). Over 94–118 (ETVVILLLEASALAARAAVVQPLDN) the chain is Extracellular. A helical membrane pass occupies residues 119–140 (VIDVITCSSMVSSLCFLGAIAM). The Cytoplasmic segment spans residues 141–163 (DRYVSIFYALRYHSIVTLPRARQ). The helical transmembrane segment at 164 to 183 (AIAAIWVASVLFSTLFIAYY) threads the bilayer. The Extracellular portion of the chain corresponds to 184–191 (DHAAVLLC). Residues 192-211 (LVVFFLAMLVLMAVLYVHML) form a helical membrane-spanning segment. Topologically, residues 212–240 (ARACQHAQGIARLHKRQRPLHQGFGLKGA) are cytoplasmic. A helical membrane pass occupies residues 241 to 266 (VTLTILLGIFFLCWGPFFLHLTLIVL). The Extracellular segment spans residues 267–279 (CPQHPTCSCIFKN). Residues 280–300 (FNLFLTLIICNAIIDPLIYAF) traverse the membrane as a helical segment. The Cytoplasmic segment spans residues 301–317 (RRQELRRTLKEGLTCSW). A lipid anchor (S-palmitoyl cysteine) is attached at Cys315.

This sequence belongs to the G-protein coupled receptor 1 family. Interacts with MGRN1, but does not undergo MGRN1-mediated ubiquitination; this interaction competes with GNAS-binding and thus inhibits agonist-induced cAMP production. Interacts with OPN3; the interaction results in a decrease in MC1R-mediated cAMP signaling and ultimately a decrease in melanin production in melanocytes.

The protein resides in the cell membrane. Functionally, receptor for MSH (alpha, beta and gamma) and ACTH. The activity of this receptor is mediated by G proteins which activate adenylate cyclase. Mediates melanogenesis, the production of eumelanin (black/brown) and phaeomelanin (red/yellow), via regulation of cAMP signaling in melanocytes. In Hylobates lar (Lar gibbon), this protein is Melanocyte-stimulating hormone receptor (MC1R).